The sequence spans 199 residues: Pyridoxine/pyridoxamine 5'-phosphate oxidase (199 aa).

FMN-binding positions include 44 to 49 (RTVLLK), 59 to 60 (YT), Lys66, and Gln91. A substrate-binding site is contributed by Lys49. The substrate site is built by Tyr109, Arg113, and Ser117. FMN-binding positions include 126-127 (QS) and Trp171. 177–179 (RLH) contacts substrate. Arg181 contributes to the FMN binding site.

It belongs to the pyridoxamine 5'-phosphate oxidase family. In terms of assembly, homodimer. It depends on FMN as a cofactor.

It carries out the reaction pyridoxamine 5'-phosphate + O2 + H2O = pyridoxal 5'-phosphate + H2O2 + NH4(+). The catalysed reaction is pyridoxine 5'-phosphate + O2 = pyridoxal 5'-phosphate + H2O2. Its pathway is cofactor metabolism; pyridoxal 5'-phosphate salvage; pyridoxal 5'-phosphate from pyridoxamine 5'-phosphate: step 1/1. It functions in the pathway cofactor metabolism; pyridoxal 5'-phosphate salvage; pyridoxal 5'-phosphate from pyridoxine 5'-phosphate: step 1/1. Catalyzes the oxidation of either pyridoxine 5'-phosphate (PNP) or pyridoxamine 5'-phosphate (PMP) into pyridoxal 5'-phosphate (PLP). This Xanthomonas campestris pv. campestris (strain 8004) protein is Pyridoxine/pyridoxamine 5'-phosphate oxidase.